Here is a 247-residue protein sequence, read N- to C-terminus: uncharacterized protein (247 aa).

3 helical membrane passes run 108-128, 136-156, and 194-214; these read WYINFIPMFVYGCLDEAFLII, IFSVYNGMSMLASAAVANIIC, and GAKLSGLWMGLTLGMLPLFFI.

It is found in the membrane. This is an uncharacterized protein from Caenorhabditis elegans.